The sequence spans 39 residues: Cytochrome b6-f complex subunit 5 (39 aa).

The chain crosses the membrane as a helical span at residues 5 to 25; that stretch reads LLCGIVLGLVPITLLGLFVSA.

This sequence belongs to the PetG family. In terms of assembly, the 4 large subunits of the cytochrome b6-f complex are cytochrome b6, subunit IV (17 kDa polypeptide, PetD), cytochrome f and the Rieske protein, while the 4 small subunits are PetG, PetL, PetM and PetN. The complex functions as a dimer.

Its subcellular location is the cellular thylakoid membrane. Its function is as follows. Component of the cytochrome b6-f complex, which mediates electron transfer between photosystem II (PSII) and photosystem I (PSI), cyclic electron flow around PSI, and state transitions. PetG is required for either the stability or assembly of the cytochrome b6-f complex. This Prochlorococcus marinus subsp. pastoris (strain CCMP1986 / NIES-2087 / MED4) protein is Cytochrome b6-f complex subunit 5.